Reading from the N-terminus, the 258-residue chain is Short-chain dehydrogenase/reductase FrzI (258 aa).

3 residues coordinate NADP(+): I21, N41, and N94. Active-site proton donor residues include S143 and S144. NADP(+) contacts are provided by Y157, K161, V191, and T193. Y157 functions as the Proton acceptor in the catalytic mechanism. K161 serves as the catalytic Lowers pKa of active site Tyr.

This sequence belongs to the short-chain dehydrogenases/reductases (SDR) family.

The enzyme catalyses (1S,3S,6S,7S,8R)-7-hydroxy-6-[(4-methoxyphenyl)methyl]-3-(methylamino)-5-azatricyclo[6.3.1.0(1,5)]dodecan-9-one + NADPH + H(+) = (1S,3S,6S,7S,8S,9S)-6-[(4-methoxyphenyl)methyl]-3-(methylamino)-5-azatricyclo[6.3.1.0(1,5)]dodecane-7,9-diol + NADP(+). It functions in the pathway secondary metabolite biosynthesis. Short-chain dehydrogenase/reductase; part of the gene cluster that mediates the biosynthesis of the alkaloid (-)-FR901483, a potent immunosuppressant that shows efficacy in animal models and a probable inhibitor of purine nucleotide biosynthesis by targeting phosphoribosylpyrophosphate amidotransferase (PPAT). Within the pathway, FrzI catalyzes the formation of dephospho-(-)-FR901483 from the aza-tricyclic intermediate produced by FrzH. The biosynthesis of (-)-FR901483 starts with the condensation of two L-tyrosines to yield (S,S)-dityrosyl-piperazine. This process occurs in 3 steps with the non-canonical nonribosomal peptide synthetase FrzA catalyzing the reduction of L-tyrosine into L-tyrosinal, the spontaneous condensation of 2 L-tyrosinal units, and the subsequent reduction by the NmrA-like family domain-containing oxidoreductase FrzB. The cytochrome P450 monooxygenase FrzC then performs coupling between N10 and C1' to morph the piperazine into a 1,4-diazabicyclo[3.2.1]octane spiro-fused to a 2,5-cyclohexadienone. The dienone portion is further reduced to cyclohexanone by the flavin-dependent reductase FrzD. The methyltranserases (MTs) FrzE and FrzF are then involved in the methylation at the C10' amine and the C4 phenolic oxygen, respectively. The order of the two MTs appear to be interchangeable. Cleavage of the C9-N10' bond by the dioxygenase FrzG then leads to formation of a conjugated iminium. In addition to the oxidation of C9, an additional dehydrogenation between C7 and C8 can occur to give a likely shunt product. The next biosynthetic step is the intramolecular aldol condensation catalyzed by the newly identified aldolase FrzH to yield an aza-tricyclic product with the formation of a C9-C3' bond. The short-chain dehydrogenase/reductase FrzI then produces dephospho-(-)-FR901483 that is phosphorylated at C4'-OH into (-)-FR901483 by the phosphotransferase FrzJ. This is Short-chain dehydrogenase/reductase FrzI from Cladobotryum sp.